Here is a 162-residue protein sequence, read N- to C-terminus: Transcription elongation factor GreA (162 aa).

Residues 50–75 (YHAAREEQGHLESRIRQLQELLRTAK) are a coiled coil.

Belongs to the GreA/GreB family.

Necessary for efficient RNA polymerase transcription elongation past template-encoded arresting sites. The arresting sites in DNA have the property of trapping a certain fraction of elongating RNA polymerases that pass through, resulting in locked ternary complexes. Cleavage of the nascent transcript by cleavage factors such as GreA or GreB allows the resumption of elongation from the new 3'terminus. GreA releases sequences of 2 to 3 nucleotides. This chain is Transcription elongation factor GreA, found in Saccharopolyspora erythraea (strain ATCC 11635 / DSM 40517 / JCM 4748 / NBRC 13426 / NCIMB 8594 / NRRL 2338).